Here is a 4700-residue protein sequence, read N- to C-terminus: StAR-related lipid transfer protein 9 (4700 aa).

The Kinesin motor domain maps to 3 to 384 (NVQVAVRVRP…LRYASSAKNI (382 aa)). 103–110 (GQTGSGKT) serves as a coordination point for ATP. Residues 310–328 (GDSGILSSPSGTSSGGAPS) show a composition bias toward low complexity. Residues 310 to 331 (GDSGILSSPSGTSSGGAPSRRQ) are disordered. An FHA domain is found at 498–569 (LKEGTTKIGR…LTQGAVITLG (72 aa)). Composition is skewed to basic and acidic residues over residues 631–646 (QCDE…ETSH) and 867–877 (TSEKTSSEEHL). Disordered regions lie at residues 631-652 (QCDE…QIQQ), 851-880 (WDPS…LPQA), 1057-1104 (KKSS…SDTD), and 1128-1188 (ERKW…GFTA). The span at 1134–1146 (PEPENSESDDSQL) shows a compositional bias: acidic residues. A Phosphoserine modification is found at Ser-1203. Disordered stretches follow at residues 1939-1976 (MPGE…EGKN), 2014-2043 (ERNP…RVNN), 2088-2179 (DQKE…PARD), 2254-2290 (ESQV…QEEN), 2377-2403 (GVEH…SSEA), 2416-2444 (MGSH…SPQD), 2479-2539 (LNKV…PRLL), 2589-2613 (RVAG…EGEA), 2642-2678 (LSAD…RKRR), 2696-2731 (SSSS…PVEE), 2765-2789 (PQET…PRTL), 2821-2852 (VQNS…ASPK), 2892-2955 (SKHS…PCRQ), 3124-3144 (NAQV…PHTL), 3199-3241 (HTCS…GLDG), 3274-3412 (SLRQ…MPST), 3564-3611 (IALG…KGSA), 3766-3790 (SDTS…AEET), 3830-3884 (LPSV…RVQK), 3906-3991 (ASTQ…SPKL), 4033-4086 (PEKV…QHLS), and 4153-4193 (PGGL…EWSK). Positions 2088 to 2100 (DQKEQEKTDHAFR) are enriched in basic and acidic residues. The span at 2103-2118 (SSGNPLPSKDQPSSPR) shows a compositional bias: polar residues. The segment covering 2119-2129 (QTDDTVFRDSE) has biased composition (basic and acidic residues). Polar residues predominate over residues 2137–2148 (SIGNHPQVQKIT). Basic and acidic residues predominate over residues 2153–2169 (RSREGVRESEPVREHTH). The span at 2254–2266 (ESQVAEHVSSSNQ) shows a compositional bias: polar residues. Basic and acidic residues-rich tracts occupy residues 2267-2279 (EEPK…EEMP) and 2379-2391 (EHQD…RSHS). Over residues 2500 to 2510 (QASKPRQKAEK) the composition is skewed to basic and acidic residues. A compositionally biased stretch (polar residues) spans 2642–2653 (LSADSFESLPNT). The span at 2712-2729 (PSSADPLAPDSPRSSAPV) shows a compositional bias: low complexity. The segment covering 2916-2925 (APCRHPREAL) has biased composition (basic and acidic residues). A compositionally biased stretch (polar residues) spans 3124-3141 (NAQVCQTNPEPPATTQGP). Composition is skewed to polar residues over residues 3274-3285 (SLRQNETPQPAA), 3320-3339 (SSPT…QELN), and 3368-3387 (SGKS…QKAS). Residues 3388–3397 (SRLDDGTTDH) are compositionally biased toward basic and acidic residues. Over residues 3857-3872 (SSPSPSSPHSPGLFPS) the composition is skewed to low complexity. A compositionally biased stretch (polar residues) spans 3906 to 3924 (ASTQEPGLSPGSLTLSAPS). Over residues 3958–3975 (LGGSQRGRSSLQRSNGRS) the composition is skewed to low complexity. Positions 4048–4065 (EPSQWQSRTENGGESSAS) are enriched in polar residues. The stretch at 4334 to 4387 (SDIELMLQDYQQAHEEAKVEIARARDQLRERTEQEKLRIHQKIISQLLKEEDKL) forms a coiled coil. The span at 4397 to 4411 (CTSSNGSLSSGMTSG) shows a compositional bias: low complexity. The disordered stretch occupies residues 4397–4419 (CTSSNGSLSSGMTSGYNSSPALS). The START domain maps to 4483–4700 (SYQDLAKHVV…IARLASFLGR (218 aa)).

Belongs to the TRAFAC class myosin-kinesin ATPase superfamily. Kinesin family. As to quaternary structure, interacts with ATAD3A. In terms of tissue distribution, expressed in the central nervous system, muscle cells (heart and skeletal muscle), pancreas, prostate and lung.

It localises to the cytoplasm. It is found in the cytoskeleton. The protein localises to the microtubule organizing center. Its subcellular location is the centrosome. The protein resides in the centriole. It localises to the nucleus. Functionally, microtubule-dependent motor protein required for spindle pole assembly during mitosis. Required to stabilize the pericentriolar material (PCM). This is StAR-related lipid transfer protein 9 (STARD9) from Homo sapiens (Human).